A 236-amino-acid polypeptide reads, in one-letter code: Phosphoribosylaminoimidazole-succinocarboxamide synthase (236 aa).

Belongs to the SAICAR synthetase family.

The enzyme catalyses 5-amino-1-(5-phospho-D-ribosyl)imidazole-4-carboxylate + L-aspartate + ATP = (2S)-2-[5-amino-1-(5-phospho-beta-D-ribosyl)imidazole-4-carboxamido]succinate + ADP + phosphate + 2 H(+). It participates in purine metabolism; IMP biosynthesis via de novo pathway; 5-amino-1-(5-phospho-D-ribosyl)imidazole-4-carboxamide from 5-amino-1-(5-phospho-D-ribosyl)imidazole-4-carboxylate: step 1/2. The sequence is that of Phosphoribosylaminoimidazole-succinocarboxamide synthase from Campylobacter jejuni subsp. jejuni serotype O:6 (strain 81116 / NCTC 11828).